The primary structure comprises 85 residues: Small ribosomal subunit protein bS20 (85 aa).

Residues 1–22 (MPQIKSAIKRVKTQNATNKRNA) form a disordered region. Residues 13 to 22 (TQNATNKRNA) are compositionally biased toward polar residues.

The protein belongs to the bacterial ribosomal protein bS20 family.

Functionally, binds directly to 16S ribosomal RNA. The sequence is that of Small ribosomal subunit protein bS20 from Lactobacillus acidophilus (strain ATCC 700396 / NCK56 / N2 / NCFM).